A 173-amino-acid chain; its full sequence is Translation initiation factor IF-3 (173 aa).

It belongs to the IF-3 family. Monomer.

It is found in the cytoplasm. Its function is as follows. IF-3 binds to the 30S ribosomal subunit and shifts the equilibrium between 70S ribosomes and their 50S and 30S subunits in favor of the free subunits, thus enhancing the availability of 30S subunits on which protein synthesis initiation begins. The sequence is that of Translation initiation factor IF-3 from Methylorubrum populi (strain ATCC BAA-705 / NCIMB 13946 / BJ001) (Methylobacterium populi).